A 210-amino-acid polypeptide reads, in one-letter code: Thymidylate kinase (210 aa).

10–17 (GLEGAGKS) serves as a coordination point for ATP.

The protein belongs to the thymidylate kinase family.

It catalyses the reaction dTMP + ATP = dTDP + ADP. Its function is as follows. Phosphorylation of dTMP to form dTDP in both de novo and salvage pathways of dTTP synthesis. This Haemophilus influenzae (strain ATCC 51907 / DSM 11121 / KW20 / Rd) protein is Thymidylate kinase (tmk).